Here is a 420-residue protein sequence, read N- to C-terminus: uncharacterized protein (420 aa).

This is an uncharacterized protein from Encephalitozoon cuniculi (strain GB-M1) (Microsporidian parasite).